The chain runs to 128 residues: Tachykinin-4 (128 aa).

An N-terminal signal peptide occupies residues 1–16 (MLPLLALLLLIGPSVC). The propeptide occupies 17–54 (TTAGDREELAFGAEAESWVTVNLKGIPVPSIELKLQEL). M66 is subject to Methionine amide. The propeptide occupies 69 to 128 (RVGGYQLGRIVQDLLGTRGLSIEGTCRQAASQQRARPGAVTRESLQSREEDEAPLTTSNV). Positions 96–128 (QAASQQRARPGAVTRESLQSREEDEAPLTTSNV) are disordered.

Belongs to the tachykinin family. As to expression, expressed in hematopoietic cells with highest levels in pre- and pro-B cells but not in later developmental stages. Also detected in uterus, skeletal muscle, brain, spleen, stomach, skin and lactating mammary gland and in cells of myeloid lineage including dendritic and microglial cells and macrophages. In uterus, highest expression is observed in non-pregnant diestrus mice and in day 5 pregnant mice. Compared with mice in diestrus, decreases 2.6-fold in uteri from non-pregnant mice in estrus and 10.2-fold in day 17 pregnant mice. Detected at sites of chronic inflammation such as granulomas.

Its subcellular location is the secreted. Functionally, tachykinins are active peptides which excite neurons, evoke behavioral responses, are potent vasodilators and secretagogues, and contract (directly or indirectly) many smooth muscles. Hemokinin induces plasma extravasation, mast cell degranulation, muscle contraction, salivary secretion and scratching behavior. Increases sperm motility. Induces potent analgesic effects and may play a role in pain modulation. Promotes survival of bone marrow B lineage cells and of cultured LPS-stimulated pre-B cells and may act as an autocrine factor required for B-cell survival and proliferation. Lowers systemic arterial pressure following intravenous injection. Induces interferon-gamma production and may play a role in the inflammatory response. Shows potent affinity and specificity for the NK-1 receptor. The polypeptide is Tachykinin-4 (Mus musculus (Mouse)).